We begin with the raw amino-acid sequence, 488 residues long: Histone deacetylase 2 (488 aa).

The segment at 9-322 (KKKVCYYYDG…WTYETAVALD (314 aa)) is histone deacetylase. Residues Gly-28 and Lys-32 each coordinate 1D-myo-inositol 1,4,5,6-tetrakisphosphate. Lys-75 is modified (N6-acetyllysine; alternate). Lys-75 participates in a covalent cross-link: Glycyl lysine isopeptide (Lys-Gly) (interchain with G-Cter in SUMO2); alternate. His-142 is a catalytic residue. Asp-175, Asp-177, His-179, Phe-188, Thr-191, Val-194, Ser-198, and Phe-199 together coordinate Ca(2+). Asp-177 and His-179 together coordinate Zn(2+). At Lys-221 the chain carries N6-acetyllysine. Tyr-223 is a binding site for Ca(2+). Cys-262 carries the post-translational modification S-nitrosocysteine. Residue Asp-265 participates in Zn(2+) binding. Residue Arg-271 participates in 1D-myo-inositol 1,4,5,6-tetrakisphosphate binding. Residue Cys-274 is modified to S-nitrosocysteine. The interval 389-488 (AVHEDSGDED…GAKSEQLSNP (100 aa)) is disordered. Phosphoserine occurs at positions 394, 407, 422, and 424. A compositionally biased stretch (basic and acidic residues) spans 402-417 (PDKRISIRASDKRIAC). A compositionally biased stretch (acidic residues) spans 418–428 (DEEFSDSEDEG). Basic and acidic residues predominate over residues 429–481 (EGGRRNVADHKKGAKKARIEEDKKETEDKKTDVKEEDKSKDNSGEKTDPKGAK). Glycyl lysine isopeptide (Lys-Gly) (interchain with G-Cter in SUMO2) cross-links involve residues Lys-439, Lys-452, Lys-458, Lys-462, Lys-478, and Lys-481.

It belongs to the histone deacetylase family. HD type 1 subfamily. Part of the core histone deacetylase (HDAC) complex composed of HDAC1, HDAC2, RBBP4 and RBBP7, the core complex associates with SIN3, SAP18 and SAP30 to form the SIN3 HDAC complex. Component of the nucleosome remodeling and deacetylase (NuRD) repressor complex, composed of core proteins MTA1, MTA2, MTA3, RBBP4, RBBP7, HDAC1, HDAC2, MBD2, MBD3, and peripherally associated proteins CDK2AP1, CDK2AP2, GATAD2A, GATAD2B, CHD3, CHD4 and CHD5. The exact stoichiometry of the NuRD complex is unknown, and some subunits such as MBD2 and MBD3, GATAD2A and GATAD2B, and CHD3, CHD4 and CHD5 define mutually exclusive NuRD complexes. Component of a RCOR/GFI/KDM1A/HDAC complex. Component of a BHC histone deacetylase complex that contains HDAC1, HDAC2, HMG20B, KDM1A, RCOR1 and PHF21A. The BHC complex may also contain ZMYM2, ZNF217, ZMYM3, GSE1 and GTF2I. Part of a complex containing the core histones H2A, H2B, H3 and H4, DEK and unphosphorylated DAXX. Part of a complex containing ATR and CHD4. Forms a heterologous complex at least with YY1. Interacts in the late S-phase of DNA-replication with DNMT1 in the other transcriptional repressor complex composed of DNMT1, DMAP1, PCNA, CAF1. Component of a mSin3A corepressor complex that contains SIN3A, SAP130, SUDS3, ARID4B, HDAC1 and HDAC2. Part of a complex composed of TRIM28, HDAC1, HDAC2 and EHMT2. Part of a complex containing at least CDYL, MIER1, MIER2, HDAC1 and HDAC2. Component of a histone deacetylase complex containing DNTTIP1, ZNF541, HDAC1 and HDAC2. Forms a complex comprising APPL1, RUVBL2, APPL2, CTNNB1 and HDAC1. Interacts directly with GFI1. Interacts directly with GFI1B. Interacts with APEX1; the interaction is not dependent on the acetylated status of APEX1. Interacts with ATR. Interacts with BCL6 (non-acetylated form). Interacts with BEND3. Interacts with CBFA2T3. Interacts with CDK2AP1. Interacts with CHD4. Interacts with CHD5. Interacts with CHFR. Interacts with CRY1. Interacts with DNMT1. Interacts with GATAD2A. Interacts with HCFC1. Interacts with HDAC7. Interacts with HDAC10. Interacts with INSM1. Interacts with KDM4A. Interacts with MACROH2A1 (via the non-histone region). Interacts with MBD3L2. Interacts with MTA1, with a preference for sumoylated MTA1. Interacts with NACC2. Interacts with NRIP1. Interacts with PELP1. Interacts with PIMREG. Interacts with PRDM6. Interacts with PWWP2B Interacts with SAP30. Interacts with SAP30L. Interacts with SETDB1. Interacts with SIX3. Interacts with SMARCAD1. Interacts with SNW1. Interacts with SPHK2. Interacts with SPEN/MINT. Interacts (CK2 phosphorylated form) with SP3. Interacts with SUV39H1. Interacts with TSHZ3 (via its N-terminus). Interacts with ZMYND8. Interacts with ZNF431. Interacts with ZNF263; recruited to the SIX3 promoter along with other proteins involved in chromatin modification and transcriptional corepression where it contributes to transcriptional repression. Identified in a complex with HDAC1, KCTD19, DNTTIP1 and ZNF541. Component of the SIN3B complex, which includes SIN3B, HDAC2, PHF12 and MORF4L1; interacts directly with all subunits. The cofactor is Zn(2+). Ca(2+) is required as a cofactor. In terms of processing, S-nitrosylated by GAPDH. In neurons, S-nitrosylation at Cys-262 and Cys-274 does not affect enzyme activity, but induces HDAC2 release from chromatin. This in turn increases acetylation of histones surrounding neurotrophin-dependent gene promoters and promotes their transcription. In embryonic cortical neurons, S-Nitrosylation regulates dendritic growth and branching.

The protein localises to the nucleus. The protein resides in the cytoplasm. The catalysed reaction is N(6)-acetyl-L-lysyl-[histone] + H2O = L-lysyl-[histone] + acetate. It catalyses the reaction N(6)-acetyl-L-lysyl-[protein] + H2O = L-lysyl-[protein] + acetate. The enzyme catalyses N(6)-(2E)-butenoyl-L-lysyl-[protein] + H2O = (2E)-2-butenoate + L-lysyl-[protein]. It carries out the reaction N(6)-(2-hydroxyisobutanoyl)-L-lysyl-[protein] + H2O = 2-hydroxy-2-methylpropanoate + L-lysyl-[protein]. The catalysed reaction is N(6)-[(S)-lactoyl]-L-lysyl-[protein] + H2O = (S)-lactate + L-lysyl-[protein]. Inositol tetraphosphate (1D-myo-inositol 1,4,5,6-tetrakisphosphate) may act as an intermolecular glue between HDAC2 and N-Cor repressor complex components. Histone deacetylase that catalyzes the deacetylation of lysine residues on the N-terminal part of the core histones (H2A, H2B, H3 and H4). Histone deacetylation gives a tag for epigenetic repression and plays an important role in transcriptional regulation, cell cycle progression and developmental events. Histone deacetylases act via the formation of large multiprotein complexes. Forms transcriptional repressor complexes by associating with MAD, SIN3, YY1 and N-COR. Component of a RCOR/GFI/KDM1A/HDAC complex that suppresses, via histone deacetylase (HDAC) recruitment, a number of genes implicated in multilineage blood cell development. Acts as a component of the histone deacetylase NuRD complex which participates in the remodeling of chromatin. Component of the SIN3B complex that represses transcription and counteracts the histone acetyltransferase activity of EP300 through the recognition H3K27ac marks by PHF12 and the activity of the histone deacetylase HDAC2. Also deacetylates non-histone targets: deacetylates TSHZ3, thereby regulating its transcriptional repressor activity. May be involved in the transcriptional repression of circadian target genes, such as PER1, mediated by CRY1 through histone deacetylation. Involved in MTA1-mediated transcriptional corepression of TFF1 and CDKN1A. In addition to protein deacetylase activity, also acts as a protein-lysine deacylase by recognizing other acyl groups: catalyzes removal of (2E)-butenoyl (crotonyl), lactoyl (lactyl) and 2-hydroxyisobutanoyl (2-hydroxyisobutyryl) acyl groups from lysine residues, leading to protein decrotonylation, delactylation and de-2-hydroxyisobutyrylation, respectively. The chain is Histone deacetylase 2 from Mus musculus (Mouse).